We begin with the raw amino-acid sequence, 64 residues long: Ribosome biogenesis protein Nop10 (64 aa).

This sequence belongs to the NOP10 family.

Involved in ribosome biogenesis; more specifically in 18S rRNA pseudouridylation and in cleavage of pre-rRNA. This Ignicoccus hospitalis (strain KIN4/I / DSM 18386 / JCM 14125) protein is Ribosome biogenesis protein Nop10.